The chain runs to 289 residues: MKKVPGPIVLVEPLSGNTSLLIKVNEVLAVRRSRYQEIMVVETEDYGRALILDDYIQSSYYDEAFYHESLVHPAMVTHPAPRDVLILGGGEGATLREVLKHPTVEKAVMVDIDGDVVELSKRFLPQMHQGAFDSPRAEVVIEDGFVYVKRALEEGRKFDVVIMDLTDPYSSEIAKQLYTAEFINQIMKLLRGDGIMVTQAGNSFYFPEAYDMVLSAVKANFPVVAEYNVWIPSFGYAVNYILGSLKYDPRALPAEEVDKRLADRGVKTRFYTGRAHVALMNMPVYRRLR.

The PABS domain occupies 5 to 245 (PGPIVLVEPL…YAVNYILGSL (241 aa)). Glutamine 36 contacts S-methyl-5'-thioadenosine. Spermidine is bound by residues histidine 67 and glutamate 91. S-methyl-5'-thioadenosine is bound by residues aspartate 111 and 143–144 (DG). Residue aspartate 164 is the Proton acceptor of the active site.

The protein belongs to the spermidine/spermine synthase family. In terms of assembly, homodimer or homotetramer.

The protein localises to the cytoplasm. The enzyme catalyses S-adenosyl 3-(methylsulfanyl)propylamine + putrescine = S-methyl-5'-thioadenosine + spermidine + H(+). Its pathway is amine and polyamine biosynthesis; spermidine biosynthesis; spermidine from putrescine: step 1/1. Functionally, catalyzes the irreversible transfer of a propylamine group from the amino donor S-adenosylmethioninamine (decarboxy-AdoMet) to putrescine (1,4-diaminobutane) to yield spermidine. The sequence is that of Polyamine aminopropyltransferase from Pyrobaculum arsenaticum (strain DSM 13514 / JCM 11321 / PZ6).